A 560-amino-acid polypeptide reads, in one-letter code: Serine/threonine-protein kinase TOS3 (560 aa).

Residues 50–344 (FEILATLGNG…LADIKVHPFM (295 aa)) enclose the Protein kinase domain. Residues 56–64 (LGNGQYGKV) and K79 each bind ATP. The active-site Proton acceptor is the D189.

This sequence belongs to the protein kinase superfamily. Ser/Thr protein kinase family. Post-translationally, autophosphorylated.

The enzyme catalyses L-seryl-[protein] + ATP = O-phospho-L-seryl-[protein] + ADP + H(+). The catalysed reaction is L-threonyl-[protein] + ATP = O-phospho-L-threonyl-[protein] + ADP + H(+). Functionally, one of the three SNF1 protein kinases (with SAK1 and ELM1) which are required for growth on nonfermentable carbon sources and nonpreferred sugars and for response to environmental stress. Activates SNF1 by phosphorylation of its activation-loop 'Thr-210'. Required for the regulation by SNF1 of the transcription of a large set of genes, the modification the activity of metabolic enzymes, and the control of various nutrient-responsive cellular developmental processes. Also phosphorylates GAL83, MIG1 and SIP2. The polypeptide is Serine/threonine-protein kinase TOS3 (TOS3) (Saccharomyces cerevisiae (strain ATCC 204508 / S288c) (Baker's yeast)).